Reading from the N-terminus, the 453-residue chain is Bifunctional protein GlmU (453 aa).

Residues 1 to 226 (MFAIAILAAG…IDEVSGVNDR (226 aa)) are pyrophosphorylase. UDP-N-acetyl-alpha-D-glucosamine contacts are provided by residues 7 to 10 (LAAG), Lys-21, Gln-73, and 78 to 79 (GT). Asp-103 serves as a coordination point for Mg(2+). Positions 140, 155, 170, and 224 each coordinate UDP-N-acetyl-alpha-D-glucosamine. Asn-224 serves as a coordination point for Mg(2+). The segment at 227–247 (AQLANCENLIQQSLRNHWMSK) is linker. The N-acetyltransferase stretch occupies residues 248–453 (GVSFIDPESC…NWKTREETNQ (206 aa)). UDP-N-acetyl-alpha-D-glucosamine contacts are provided by Arg-329 and Lys-347. The Proton acceptor role is filled by His-359. UDP-N-acetyl-alpha-D-glucosamine is bound by residues Tyr-362 and Asn-373. Residues Ala-376, Ala-419, and Arg-436 each contribute to the acetyl-CoA site.

This sequence in the N-terminal section; belongs to the N-acetylglucosamine-1-phosphate uridyltransferase family. The protein in the C-terminal section; belongs to the transferase hexapeptide repeat family. Homotrimer. Requires Mg(2+) as cofactor.

It is found in the cytoplasm. The catalysed reaction is alpha-D-glucosamine 1-phosphate + acetyl-CoA = N-acetyl-alpha-D-glucosamine 1-phosphate + CoA + H(+). It carries out the reaction N-acetyl-alpha-D-glucosamine 1-phosphate + UTP + H(+) = UDP-N-acetyl-alpha-D-glucosamine + diphosphate. It functions in the pathway nucleotide-sugar biosynthesis; UDP-N-acetyl-alpha-D-glucosamine biosynthesis; N-acetyl-alpha-D-glucosamine 1-phosphate from alpha-D-glucosamine 6-phosphate (route II): step 2/2. It participates in nucleotide-sugar biosynthesis; UDP-N-acetyl-alpha-D-glucosamine biosynthesis; UDP-N-acetyl-alpha-D-glucosamine from N-acetyl-alpha-D-glucosamine 1-phosphate: step 1/1. The protein operates within bacterial outer membrane biogenesis; LPS lipid A biosynthesis. Functionally, catalyzes the last two sequential reactions in the de novo biosynthetic pathway for UDP-N-acetylglucosamine (UDP-GlcNAc). The C-terminal domain catalyzes the transfer of acetyl group from acetyl coenzyme A to glucosamine-1-phosphate (GlcN-1-P) to produce N-acetylglucosamine-1-phosphate (GlcNAc-1-P), which is converted into UDP-GlcNAc by the transfer of uridine 5-monophosphate (from uridine 5-triphosphate), a reaction catalyzed by the N-terminal domain. The sequence is that of Bifunctional protein GlmU from Prochlorococcus marinus (strain MIT 9211).